The sequence spans 594 residues: Aspartate--tRNA(Asp/Asn) ligase (594 aa).

Glu176 lines the L-aspartate pocket. Residues Gln200–Lys203 are aspartate. An L-aspartate-binding site is contributed by Arg222. Residues Arg222–Glu224 and Gln231 each bind ATP. An L-aspartate-binding site is contributed by His450. Glu484 contributes to the ATP binding site. L-aspartate is bound at residue Arg491. Gly536–Arg539 serves as a coordination point for ATP.

This sequence belongs to the class-II aminoacyl-tRNA synthetase family. Type 1 subfamily. As to quaternary structure, homodimer.

The protein localises to the cytoplasm. It carries out the reaction tRNA(Asx) + L-aspartate + ATP = L-aspartyl-tRNA(Asx) + AMP + diphosphate. In terms of biological role, aspartyl-tRNA synthetase with relaxed tRNA specificity since it is able to aspartylate not only its cognate tRNA(Asp) but also tRNA(Asn). Reaction proceeds in two steps: L-aspartate is first activated by ATP to form Asp-AMP and then transferred to the acceptor end of tRNA(Asp/Asn). The chain is Aspartate--tRNA(Asp/Asn) ligase from Geobacillus sp. (strain WCH70).